Consider the following 133-residue polypeptide: Holo-[acyl-carrier-protein] synthase (133 aa).

2 residues coordinate Mg(2+): D8 and E57.

It belongs to the P-Pant transferase superfamily. AcpS family. It depends on Mg(2+) as a cofactor.

It is found in the cytoplasm. It carries out the reaction apo-[ACP] + CoA = holo-[ACP] + adenosine 3',5'-bisphosphate + H(+). In terms of biological role, transfers the 4'-phosphopantetheine moiety from coenzyme A to a Ser of acyl-carrier-protein. In Bartonella henselae (strain ATCC 49882 / DSM 28221 / CCUG 30454 / Houston 1) (Rochalimaea henselae), this protein is Holo-[acyl-carrier-protein] synthase.